The following is a 33-amino-acid chain: NVDFNSESTRRKKKQKEIVDLHNSLRRRVSPTA.

The interval 1-33 (NVDFNSESTRRKKKQKEIVDLHNSLRRRVSPTA) is disordered. Basic residues predominate over residues 24–33 (SLRRRVSPTA).

This sequence belongs to the CRISP family. Contains 8 disulfide bonds. As to expression, expressed by the venom gland.

It localises to the secreted. In terms of biological role, blocks contraction of smooth muscle elicited by high potassium-induced depolarization, but does not block caffeine-stimulated contraction. May target voltage-gated calcium channels on smooth muscle (Cav). In Naja naja (Indian cobra), this protein is Cysteine-rich venom protein.